We begin with the raw amino-acid sequence, 146 residues long: Pseudoazurin (146 aa).

Residues 1 to 23 (MRNIAIKFAAAGILAMLAAPALA) form the signal peptide. A Plastocyanin-like domain is found at 28–116 (VHMLNKGAEG…MGMIALIAVG (89 aa)). Cu cation is bound by residues His63, Cys101, His104, and Met109.

It depends on Cu cation as a cofactor.

The protein resides in the periplasm. This soluble electron transfer copper protein is required for the inactivation of copper-containing nitrite reductase in the presence of oxygen. Serves as a direct electron donor to the nitrite reductase. This chain is Pseudoazurin, found in Alcaligenes faecalis.